Consider the following 90-residue polypeptide: Major mite allergen Der p 23 (90 aa).

Residues 1-21 (MKFNIIIVFISLAILVHSSYA) form the signal peptide. Residues 22-42 (ANDNDDDPTTTVHPTTTEQPD) are disordered. Low complexity predominate over residues 30-39 (TTTVHPTTTE). Residues 44-90 (KFECPSRFGYFADPKDPHKFYICSNWEAVHKDCPGNTRWNEDEETCT) enclose the Chitin-binding type-2 domain. Cystine bridges form between Cys-47–Cys-66 and Cys-76–Cys-89. Residues 52-90 (GYFADPKDPHKFYICSNWEAVHKDCPGNTRWNEDEETCT) are important for IgE-binding.

In terms of assembly, monomer. Expressed in epithelial cells of the midgut.

It localises to the secreted. The protein resides in the endoplasmic reticulum. The protein localises to the cytoplasmic vesicle. Does not bind chitin in vitro. This chain is Major mite allergen Der p 23, found in Dermatophagoides pteronyssinus (European house dust mite).